The primary structure comprises 378 residues: tRNA-specific 2-thiouridylase MnmA (378 aa).

ATP-binding positions include 14–21 (AMSGGVDS) and Leu40. Cys109 functions as the Nucleophile in the catalytic mechanism. Cysteines 109 and 208 form a disulfide. Gly133 serves as a coordination point for ATP. Residues 156–158 (KDQ) form an interaction with tRNA region. Cys208 (cysteine persulfide intermediate) is an active-site residue.

Belongs to the MnmA/TRMU family.

Its subcellular location is the cytoplasm. The enzyme catalyses S-sulfanyl-L-cysteinyl-[protein] + uridine(34) in tRNA + AH2 + ATP = 2-thiouridine(34) in tRNA + L-cysteinyl-[protein] + A + AMP + diphosphate + H(+). Its function is as follows. Catalyzes the 2-thiolation of uridine at the wobble position (U34) of tRNA, leading to the formation of s(2)U34. The polypeptide is tRNA-specific 2-thiouridylase MnmA (Streptomyces griseus subsp. griseus (strain JCM 4626 / CBS 651.72 / NBRC 13350 / KCC S-0626 / ISP 5235)).